A 530-amino-acid chain; its full sequence is AA9 family lytic polysaccharide monooxygenase C (530 aa).

Residues methionine 1–alanine 18 form the signal peptide. Cu(2+)-binding residues include histidine 19 and histidine 103. 2 disulfides stabilise this stretch: cysteine 72–cysteine 190 and cysteine 114–cysteine 118. Asparagine 150 carries N-linked (GlcNAc...) asparagine glycosylation. An O2-binding site is contributed by glutamine 185. Tyrosine 187 serves as a coordination point for Cu(2+). The span at tyrosine 238–serine 251 shows a compositional bias: low complexity. Disordered stretches follow at residues tyrosine 238 to alanine 279, glutamate 297 to alanine 329, tyrosine 348 to serine 375, and glycine 492 to proline 512. Residues lysine 312 to glutamate 324 are compositionally biased toward basic and acidic residues. Residues tyrosine 348–serine 368 are compositionally biased toward low complexity.

It belongs to the polysaccharide monooxygenase AA9 family. Cu(2+) is required as a cofactor.

It is found in the secreted. The catalysed reaction is [(1-&gt;4)-beta-D-glucosyl]n+m + reduced acceptor + O2 = 4-dehydro-beta-D-glucosyl-[(1-&gt;4)-beta-D-glucosyl]n-1 + [(1-&gt;4)-beta-D-glucosyl]m + acceptor + H2O.. Its function is as follows. Lytic polysaccharide monooxygenase (LPMO) that depolymerizes polysaccharides via the oxidation of scissile alpha- or beta-(1-4)-glycosidic bonds, yielding C1 or C4 oxidation products. Catalysis by LPMOs requires the reduction of the active-site copper from Cu(II) to Cu(I) by a reducing agent and H(2)O(2) or O(2) as a cosubstrate. Amorphous cellulose is not a suitable substrate for LPMO9C, which may act at the surface of cellulose microfibrils without any release of soluble products. The chain is AA9 family lytic polysaccharide monooxygenase C from Geotrichum candidum (Oospora lactis).